We begin with the raw amino-acid sequence, 517 residues long: Keratin-associated protein 16-1 (517 aa).

11 consecutive repeat copies span residues 73–77 (CCDPV), 93–97 (CCEAT), 128–132 (CCQPV), 153–157 (CCEPA), 168–172 (CCQPV), 198–202 (CCQPV), 208–212 (CCSAV), 228–232 (CCQPV), 248–252 (CCDPS), 283–287 (CCVQS), and 303–307 (CCVSS). The segment at 73 to 307 (CCDPVICEPS…CQEPSCCVSS (235 aa)) is 11 X 5 AA repeats of C-C-X(3). A disordered region spans residues 483–517 (VSEEAPCQPTEAKPISPTTREAAAAQPAASKPANC). Low complexity predominate over residues 504–517 (AAAAQPAASKPANC).

This sequence belongs to the KRTAP type 16 family.

This Homo sapiens (Human) protein is Keratin-associated protein 16-1 (KRTAP16-1).